A 231-amino-acid chain; its full sequence is 2-C-methyl-D-erythritol 4-phosphate cytidylyltransferase (231 aa).

Belongs to the IspD/TarI cytidylyltransferase family. IspD subfamily.

The enzyme catalyses 2-C-methyl-D-erythritol 4-phosphate + CTP + H(+) = 4-CDP-2-C-methyl-D-erythritol + diphosphate. Its pathway is isoprenoid biosynthesis; isopentenyl diphosphate biosynthesis via DXP pathway; isopentenyl diphosphate from 1-deoxy-D-xylulose 5-phosphate: step 2/6. Its function is as follows. Catalyzes the formation of 4-diphosphocytidyl-2-C-methyl-D-erythritol from CTP and 2-C-methyl-D-erythritol 4-phosphate (MEP). The protein is 2-C-methyl-D-erythritol 4-phosphate cytidylyltransferase of Xylella fastidiosa (strain 9a5c).